The chain runs to 149 residues: Nucleoside diphosphate kinase (149 aa).

Residues lysine 9, phenylalanine 57, arginine 85, threonine 91, arginine 102, and asparagine 112 each coordinate ATP. Histidine 115 acts as the Pros-phosphohistidine intermediate in catalysis.

Belongs to the NDK family. As to quaternary structure, homotetramer. The cofactor is Mg(2+).

The protein resides in the cytoplasm. The catalysed reaction is a 2'-deoxyribonucleoside 5'-diphosphate + ATP = a 2'-deoxyribonucleoside 5'-triphosphate + ADP. The enzyme catalyses a ribonucleoside 5'-diphosphate + ATP = a ribonucleoside 5'-triphosphate + ADP. Its function is as follows. Major role in the synthesis of nucleoside triphosphates other than ATP. The ATP gamma phosphate is transferred to the NDP beta phosphate via a ping-pong mechanism, using a phosphorylated active-site intermediate. The chain is Nucleoside diphosphate kinase from Staphylococcus haemolyticus (strain JCSC1435).